The following is a 1212-amino-acid chain: DNA-directed RNA polymerase subunit beta'' (1212 aa).

Cysteine 229, cysteine 302, cysteine 309, and cysteine 312 together coordinate Zn(2+). Residues 1162-1212 (QKETSKNKKETSKNKKETSKNKKETSKNKKETSKNKKETSKNKKEASKNKK) are disordered.

It belongs to the RNA polymerase beta' chain family. RpoC2 subfamily. In plastids the minimal PEP RNA polymerase catalytic core is composed of four subunits: alpha, beta, beta', and beta''. When a (nuclear-encoded) sigma factor is associated with the core the holoenzyme is formed, which can initiate transcription. It depends on Zn(2+) as a cofactor.

It localises to the plastid. The protein localises to the chloroplast. The enzyme catalyses RNA(n) + a ribonucleoside 5'-triphosphate = RNA(n+1) + diphosphate. Its function is as follows. DNA-dependent RNA polymerase catalyzes the transcription of DNA into RNA using the four ribonucleoside triphosphates as substrates. In Cryptomeria japonica (Japanese cedar), this protein is DNA-directed RNA polymerase subunit beta''.